The chain runs to 305 residues: Probable L-ribulose-5-phosphate 3-epimerase UlaE (305 aa).

This sequence belongs to the L-ribulose-5-phosphate 3-epimerase family.

It carries out the reaction L-ribulose 5-phosphate = L-xylulose 5-phosphate. It participates in cofactor degradation; L-ascorbate degradation; D-xylulose 5-phosphate from L-ascorbate: step 3/4. Its function is as follows. Catalyzes the isomerization of L-xylulose-5-phosphate to L-ribulose-5-phosphate. Is involved in the anaerobic L-ascorbate utilization. In Mycoplasma pneumoniae (strain ATCC 29342 / M129 / Subtype 1) (Mycoplasmoides pneumoniae), this protein is Probable L-ribulose-5-phosphate 3-epimerase UlaE (ulaE).